We begin with the raw amino-acid sequence, 294 residues long: Elongation factor Ts (294 aa).

Positions 82–85 (TDFV) are involved in Mg(2+) ion dislocation from EF-Tu.

Belongs to the EF-Ts family.

The protein resides in the cytoplasm. Its function is as follows. Associates with the EF-Tu.GDP complex and induces the exchange of GDP to GTP. It remains bound to the aminoacyl-tRNA.EF-Tu.GTP complex up to the GTP hydrolysis stage on the ribosome. This is Elongation factor Ts from Psychrobacter cryohalolentis (strain ATCC BAA-1226 / DSM 17306 / VKM B-2378 / K5).